A 407-amino-acid chain; its full sequence is Proteasome-activating nucleotidase (407 aa).

Residues 22 to 67 are a coiled coil; sequence KEKAYLAELESKVLRLELKNKDITRENVQIKKENEILKRELDKLRI. ATP-binding positions include 192–197 and His331; that span reads GTGKTL. A docks into pockets in the proteasome alpha-ring to cause gate opening region spans residues 405–407; that stretch reads MYG.

This sequence belongs to the AAA ATPase family. Homohexamer. The hexameric complex has a two-ring architecture resembling a top hat that caps the 20S proteasome core at one or both ends. Upon ATP-binding, the C-terminus of PAN interacts with the alpha-rings of the proteasome core by binding to the intersubunit pockets.

The protein resides in the cytoplasm. In terms of biological role, ATPase which is responsible for recognizing, binding, unfolding and translocation of substrate proteins into the archaeal 20S proteasome core particle. Is essential for opening the gate of the 20S proteasome via an interaction with its C-terminus, thereby allowing substrate entry and access to the site of proteolysis. Thus, the C-termini of the proteasomal ATPase function like a 'key in a lock' to induce gate opening and therefore regulate proteolysis. Unfolding activity requires energy from ATP hydrolysis, whereas ATP binding alone promotes ATPase-20S proteasome association which triggers gate opening, and supports translocation of unfolded substrates. The sequence is that of Proteasome-activating nucleotidase from Methanococcus vannielii (strain ATCC 35089 / DSM 1224 / JCM 13029 / OCM 148 / SB).